The primary structure comprises 282 residues: Transcription factor MYB1 (282 aa).

2 HTH myb-type domains span residues 9-61 and 62-116; these read KEGL…LNYL and RPDI…SKKV. 2 consecutive DNA-binding regions (H-T-H motif) follow at residues 37–61 and 89–112; these read WRDL…LNYL and WSLI…NTYL. Residues 258 to 282 are disordered; the sequence is EDDWKQNGGKDELMGGGNGGPSSVS. The span at 260–270 shows a compositional bias: basic and acidic residues; the sequence is DWKQNGGKDEL. A compositionally biased stretch (gly residues) spans 271–282; sequence MGGGNGGPSSVS.

The protein localises to the nucleus. In terms of biological role, transcription activator involved in the spatiotemporal regulation of flavonoid biosynthesis specifically in the corms of Montbretia. Activates the promoters of enzymes involved in the biosynthesis of the flavonol kaempferol and the flavonol-glycoside kaempferol-rhamnoside. In Crocosmia x crocosmiiflora (Montbretia), this protein is Transcription factor MYB1.